The sequence spans 85 residues: Keratin-associated protein 7-1 (85 aa).

The 12 X 2 AA repeats of G-[YCGS] stretch occupies residues 37–82 (GSPLGYGCNGYSSLGYGFGGSSFSNLGCGYGGSFYRPWGSGSGFGY).

This sequence belongs to the KRTAP type 7 family. In terms of assembly, interacts with wool keratins. Wool.

Its function is as follows. In the wool cortex, wool keratin intermediate filaments are embedded in an interfilamentous matrix, consisting of hair keratin-associated proteins (KRTAP), which are essential for the formation of a rigid and resistant wool shaft through their extensive disulfide bond cross-linking with abundant cysteine residues of wool keratins. The matrix proteins include the high-sulfur and high-glycine-tyrosine keratins. This is Keratin-associated protein 7-1 (KRTAP7-1) from Ovis aries (Sheep).